A 414-amino-acid polypeptide reads, in one-letter code: Phospholipase A1-IIbeta (414 aa).

Lys19 is covalently cross-linked (Glycyl lysine isopeptide (Lys-Gly) (interchain with G-Cter in ubiquitin)). A coiled-coil region spans residues 191–217 (DKTSAQEQVQEELKRLLELYKNEDVTI). Ser223 serves as the catalytic Acyl-ester intermediate. Residues Ser223, Asp289, and His326 each act as charge relay system in the active site. A disordered region spans residues 386–414 (DGTWKLNGDRSKKKQEEEDEKEENNCKFP). A coiled-coil region spans residues 390–410 (KLNGDRSKKKQEEEDEKEENN). The span at 392–401 (NGDRSKKKQE) shows a compositional bias: basic and acidic residues.

It belongs to the AB hydrolase superfamily. Lipase family.

The protein resides in the cytoplasm. Acylhydrolase that catalyzes the hydrolysis of phospholipids at the sn-1 position. This is Phospholipase A1-IIbeta from Arabidopsis thaliana (Mouse-ear cress).